A 214-amino-acid chain; its full sequence is Alpha-S1-casein (214 aa).

The signal sequence occupies residues 1–15 (MKLLILTCLVAVALA). A disordered region spans residues 59–91 (IGSESTEDQAMEDAKQMKAGSSSSSEEIVPNSA). Ser61, Ser63, Ser79, Ser80, Ser81, Ser82, Ser83, Ser90, and Ser130 each carry phosphoserine.

The protein belongs to the alpha-casein family. In terms of tissue distribution, mammary gland specific. Secreted in milk.

The protein localises to the secreted. Its function is as follows. Important role in the capacity of milk to transport calcium phosphate. This Capra hircus (Goat) protein is Alpha-S1-casein (CSN1S1).